We begin with the raw amino-acid sequence, 272 residues long: Cell division protein ZipA (272 aa).

The Periplasmic segment spans residues 1 to 4 (METH). Residues 5–25 (ILFFILAGLLIAVLIGYSIWS) traverse the membrane as a helical segment. Residues 26-272 (ARREKSRIFS…RQNYLLRVAN (247 aa)) are Cytoplasmic-facing.

Belongs to the ZipA family. Interacts with FtsZ via their C-terminal domains.

The protein resides in the cell inner membrane. Essential cell division protein that stabilizes the FtsZ protofilaments by cross-linking them and that serves as a cytoplasmic membrane anchor for the Z ring. Also required for the recruitment to the septal ring of downstream cell division proteins. The polypeptide is Cell division protein ZipA (Glaesserella parasuis serovar 5 (strain SH0165) (Haemophilus parasuis)).